A 498-amino-acid chain; its full sequence is ATP synthase subunit beta, chloroplastic (498 aa).

Glycine 172–threonine 179 serves as a coordination point for ATP.

The protein belongs to the ATPase alpha/beta chains family. F-type ATPases have 2 components, CF(1) - the catalytic core - and CF(0) - the membrane proton channel. CF(1) has five subunits: alpha(3), beta(3), gamma(1), delta(1), epsilon(1). CF(0) has four main subunits: a(1), b(1), b'(1) and c(9-12).

The protein localises to the plastid. It is found in the chloroplast thylakoid membrane. The enzyme catalyses ATP + H2O + 4 H(+)(in) = ADP + phosphate + 5 H(+)(out). In terms of biological role, produces ATP from ADP in the presence of a proton gradient across the membrane. The catalytic sites are hosted primarily by the beta subunits. This Nicotiana sylvestris (Wood tobacco) protein is ATP synthase subunit beta, chloroplastic.